Here is a 466-residue protein sequence, read N- to C-terminus: 23S rRNA (uracil(1939)-C(5))-methyltransferase RlmD (466 aa).

Positions 1–54 (MVDVLNIESLDLEARGIAHRDGKVLFVEGALPGERVTVQTVRRKPSYEIAKVEE) constitute a TRAM domain. 4 residues coordinate [4Fe-4S] cluster: Cys67, Cys73, Cys76, and Cys155. Gln264, Phe293, Asn298, Glu314, Asn342, and Asp363 together coordinate S-adenosyl-L-methionine. Cys393 (nucleophile) is an active-site residue.

Belongs to the class I-like SAM-binding methyltransferase superfamily. RNA M5U methyltransferase family. RlmD subfamily.

The enzyme catalyses uridine(1939) in 23S rRNA + S-adenosyl-L-methionine = 5-methyluridine(1939) in 23S rRNA + S-adenosyl-L-homocysteine + H(+). Functionally, catalyzes the formation of 5-methyl-uridine at position 1939 (m5U1939) in 23S rRNA. This is 23S rRNA (uracil(1939)-C(5))-methyltransferase RlmD from Bordetella parapertussis (strain 12822 / ATCC BAA-587 / NCTC 13253).